The following is a 69-amino-acid chain: Omega-oxotoxin-Ol1a (69 aa).

Residues 1–68 (DWECLPLHSS…GKINTCDKYK (68 aa)) enclose the Oxytoxin-type inhibitor cystine knot (ICK) domain. 5 cysteine pairs are disulfide-bonded: C4/C18, C11/C23, C15/C64, C17/C52, and C25/C50. N69 bears the Asparagine amide mark.

The protein belongs to the spiderine family. Spiderine subfamily. As to expression, expressed by the venom gland.

It localises to the secreted. In terms of biological role, weak blocker of vertebrate P/Q-, N- and L-type voltage-gated calcium channels (Cav1 and Cav2). Is both paralytic and lethal when injected into lepidopteran larvae. Is not toxic to mice. The sequence is that of Omega-oxotoxin-Ol1a from Oxyopes lineatus (Lynx spider).